A 410-amino-acid chain; its full sequence is Bifunctional malic/malolactic enzyme (410 aa).

The Proton donor role is filled by tyrosine 36. Lysine 91 functions as the Proton acceptor in the catalytic mechanism. Residues glutamate 133, aspartate 134, and aspartate 159 each contribute to the a divalent metal cation site. NADP(+) is bound by residues 192-195 (AGAA), asparagine 286, and asparagine 317.

It belongs to the malic enzymes family. In terms of assembly, interacts with BrxC. It depends on Mg(2+) as a cofactor. Mn(2+) is required as a cofactor.

The catalysed reaction is (S)-malate + NADP(+) = pyruvate + CO2 + NADPH. The enzyme catalyses oxaloacetate + H(+) = pyruvate + CO2. It catalyses the reaction (S)-malate + H(+) = (S)-lactate + CO2. Its activity is regulated as follows. NADPH is a strong modulator that switches activity from a pyruvate-producing malic enzyme to a lactate-generating malolactic enzyme. In terms of biological role, bifunctional enzyme with both malic and malolactic enzyme activities. In the absence of NADPH, catalyzes the reversible decarboxylation of malate to pyruvate. Can use NAD and NADP, but with a very strong preference for NADP. In the presence of excess NADPH, catalyzes the non-oxidative decarboxylation of malate to lactate. During growth on glucose, contributes to NADPH balancing via oxidation of the NADPH produced in excess by other enzymatic reactions. Can also catalyze the decarboxylation of oxaloacetate. The chain is Bifunctional malic/malolactic enzyme (ytsJ) from Bacillus subtilis (strain 168).